The sequence spans 569 residues: MMLAIDMTINENQGTRSNLESPTLSCSSKGAMQERDVMFTDHNTFNITNNKSRPGSLMKSMKRKDVYEFDEDNEFEFEMGSLIHKPSRAHSLGGTSEPVSDDHKDCMEATRQLLENSPLSSVVVKTCSDHASKRKIARSSSDDSESKVESTNSFNAKKRKDAWTEEHEKWFQARIDELLTIRSISREQMIEILEDEHAGSRLQGFLESVASFLNRKENSLLKYMRAFFQVAGYEKIDIGSLAAEEDSQLNFSLEDAQVIQKVVLSYCNNEGVDLQEFGFRMSSSSLRHTNINFLYNELRELLPTSISRKGIIRYLKEIYKPLDPKDRNAWEESELKKLYTLVEQEGTRWNSIANKLGTSPAACMSQWRFVVGTSTQETIDRRKLWTNEEEAKLLDLVKSSYRSSFHTKKMTSLFTHNNHTTSNIQREIPASDSIAWHSISKKLGTKSPESCRKQYEKTIASYSSNQRQEEDQGKKRKKRKKKKSKGKRKFYVADSLKLLEHVQRQCGEAISINAIDWKGIVKQMPKWSEEELRAQATNLVASVRGWKKTRLSESVRIAITDLKSLPPDV.

Disordered stretches follow at residues 1–26 (MMLAIDMTINENQGTRSNLESPTLSC) and 133–159 (KRKIARSSSDDSESKVESTNSFNAKKR). Over residues 9–26 (INENQGTRSNLESPTLSC) the composition is skewed to polar residues. S21 carries the post-translational modification Phosphoserine. Myb-like domains are found at residues 322 to 371 (LDPK…RFVV) and 377 to 459 (ETID…EKTI). Positions 459–487 (IASYSSNQRQEEDQGKKRKKRKKKKSKGK) are disordered. Residues 474 to 487 (KKRKKRKKKKSKGK) show a composition bias toward basic residues.

Its subcellular location is the nucleus. This is DNA-binding protein eta2 (eta2) from Schizosaccharomyces pombe (strain 972 / ATCC 24843) (Fission yeast).